Reading from the N-terminus, the 629-residue chain is Glutamyl-tRNA(Gln) amidotransferase subunit E (629 aa).

Positions 405-426 (PEETRRALPDGNTQYMRPLPGK) are disordered.

The protein belongs to the GatB/GatE family. GatE subfamily. In terms of assembly, heterodimer of GatD and GatE.

The enzyme catalyses L-glutamyl-tRNA(Gln) + L-glutamine + ATP + H2O = L-glutaminyl-tRNA(Gln) + L-glutamate + ADP + phosphate + H(+). Functionally, allows the formation of correctly charged Gln-tRNA(Gln) through the transamidation of misacylated Glu-tRNA(Gln) in organisms which lack glutaminyl-tRNA synthetase. The reaction takes place in the presence of glutamine and ATP through an activated gamma-phospho-Glu-tRNA(Gln). The GatDE system is specific for glutamate and does not act on aspartate. This is Glutamyl-tRNA(Gln) amidotransferase subunit E from Thermococcus sibiricus (strain DSM 12597 / MM 739).